A 197-amino-acid polypeptide reads, in one-letter code: Imidazoleglycerol-phosphate dehydratase (197 aa).

This sequence belongs to the imidazoleglycerol-phosphate dehydratase family.

The protein resides in the cytoplasm. The catalysed reaction is D-erythro-1-(imidazol-4-yl)glycerol 3-phosphate = 3-(imidazol-4-yl)-2-oxopropyl phosphate + H2O. It functions in the pathway amino-acid biosynthesis; L-histidine biosynthesis; L-histidine from 5-phospho-alpha-D-ribose 1-diphosphate: step 6/9. This Methylocella silvestris (strain DSM 15510 / CIP 108128 / LMG 27833 / NCIMB 13906 / BL2) protein is Imidazoleglycerol-phosphate dehydratase.